The following is a 196-amino-acid chain: ATP-dependent Clp protease proteolytic subunit (196 aa).

Ser96 acts as the Nucleophile in catalysis. His121 is an active-site residue.

Belongs to the peptidase S14 family. As to quaternary structure, fourteen ClpP subunits assemble into 2 heptameric rings which stack back to back to give a disk-like structure with a central cavity, resembling the structure of eukaryotic proteasomes.

It localises to the cytoplasm. It catalyses the reaction Hydrolysis of proteins to small peptides in the presence of ATP and magnesium. alpha-casein is the usual test substrate. In the absence of ATP, only oligopeptides shorter than five residues are hydrolyzed (such as succinyl-Leu-Tyr-|-NHMec, and Leu-Tyr-Leu-|-Tyr-Trp, in which cleavage of the -Tyr-|-Leu- and -Tyr-|-Trp bonds also occurs).. Its function is as follows. Cleaves peptides in various proteins in a process that requires ATP hydrolysis. Has a chymotrypsin-like activity. Plays a major role in the degradation of misfolded proteins. This chain is ATP-dependent Clp protease proteolytic subunit, found in Streptococcus pneumoniae (strain 70585).